Consider the following 367-residue polypeptide: Cytochrome b (367 aa).

4 helical membrane-spanning segments follow: residues F33–M53, W77–I98, W113–L133, and F178–L198. 2 residues coordinate heme b: H83 and H97. The heme b site is built by H182 and H196. H201 is an a ubiquinone binding site. 4 consecutive transmembrane segments (helical) span residues I226–S246, L288–H308, F320–G340, and Y347–P367.

The protein belongs to the cytochrome b family. In terms of assembly, the cytochrome bc1 complex contains 11 subunits: 3 respiratory subunits (MT-CYB, CYC1 and UQCRFS1), 2 core proteins (UQCRC1 and UQCRC2) and 6 low-molecular weight proteins (UQCRH/QCR6, UQCRB/QCR7, UQCRQ/QCR8, UQCR10/QCR9, UQCR11/QCR10 and a cleavage product of UQCRFS1). This cytochrome bc1 complex then forms a dimer. It depends on heme b as a cofactor.

It localises to the mitochondrion inner membrane. Its function is as follows. Component of the ubiquinol-cytochrome c reductase complex (complex III or cytochrome b-c1 complex) that is part of the mitochondrial respiratory chain. The b-c1 complex mediates electron transfer from ubiquinol to cytochrome c. Contributes to the generation of a proton gradient across the mitochondrial membrane that is then used for ATP synthesis. In Hypsugo savii (Savi's pipistrelle), this protein is Cytochrome b (MT-CYB).